We begin with the raw amino-acid sequence, 174 residues long: Austinoid biosynthesis clusters protein H (174 aa).

This sequence belongs to the trt14 isomerase family. Homodimer.

It functions in the pathway secondary metabolite biosynthesis; terpenoid biosynthesis. Its function is as follows. Part of the gene cluster B that mediates the biosynthesis of austinol and dehydroaustinol, two fungal meroterpenoids. The first step of the pathway is the synthesis of 3,5-dimethylorsellinic acid by the polyketide synthase ausA. 3,5-dimethylorsellinic acid is then prenylated by the polyprenyl transferase ausN. Further epoxidation by the FAD-dependent monooxygenase ausM and cyclization by the probable terpene cyclase ausL lead to the formation of protoaustinoid A. Protoaustinoid A is then oxidized to spiro-lactone preaustinoid A3 by the combined action of the FAD-binding monooxygenases ausB and ausC, and the dioxygenase ausE. Acid-catalyzed keto-rearrangement and ring contraction of the tetraketide portion of preaustinoid A3 by ausJ lead to the formation of preaustinoid A4. The aldo-keto reductase ausK, with the help of ausH, is involved in the next step by transforming preaustinoid A4 into isoaustinone which is in turn hydroxylated by the P450 monooxygenase ausI to form austinolide. Finally, the cytochrome P450 monooxygenase ausG modifies austinolide to austinol. Austinol can be further modified to dehydroaustinol which forms a diffusible complex with diorcinol that initiates conidiation. Due to genetic rearrangements of the clusters and the subsequent loss of some enzymes, the end products of the Emericella nidulans austinoid biosynthesis clusters are austinol and dehydroaustinol, even if additional enzymes, such as the O-acetyltransferase ausQ and the cytochrome P450 monooxygenase ausR are still functional. The sequence is that of Austinoid biosynthesis clusters protein H from Emericella nidulans (strain FGSC A4 / ATCC 38163 / CBS 112.46 / NRRL 194 / M139) (Aspergillus nidulans).